The following is a 346-amino-acid chain: Trans-enoyl reductase FFUJ_12240 (346 aa).

40 to 43 (HDAK) contributes to the NADP(+) binding site. 124 to 131 (LAIATAGL) contacts substrate. NADP(+)-binding positions include 157–160 (ATAT), 180–183 (SPSN), Y198, and 245–246 (LE). A substrate-binding site is contributed by 266-270 (APSIL). Position 335-336 (335-336 (VH)) interacts with NADP(+).

This sequence belongs to the zinc-containing alcohol dehydrogenase family.

Its function is as follows. Trans-enoyl reductase; part of the gene cluster that mediates the biosynthesis of fujikurins A-D, secondary metabolites playing a role during rice infection. The polyketide synthase PKS19 acts with the trans-enoyl reductase FFUJ_12240 and the polyketide transferase FFUJ_12241 to produce fujikurins, however, the biosynthesis pathway has not been identified yet. The sequence is that of Trans-enoyl reductase FFUJ_12240 from Gibberella fujikuroi (strain CBS 195.34 / IMI 58289 / NRRL A-6831) (Bakanae and foot rot disease fungus).